The primary structure comprises 378 residues: Protein FAM170B (378 aa).

3 disordered regions span residues 1-56, 244-265, and 277-378; these read MKHH…LPDD, TRDQ…DSSE, and QQQP…QQGK. 2 stretches are compositionally biased toward low complexity: residues 277–339 and 349–378; these read QQQP…QPLQ and PQKQ…QQGK.

The protein belongs to the FAM170 family. Interacts with GOPC. As to expression, exclusively expressed in adult testis (at protein level). Expression first started at postnatal week 3 in round spermatids, elongated spermatids and mature sperm.

The protein resides in the cytoplasmic vesicle. Its subcellular location is the secretory vesicle. The protein localises to the acrosome. It is found in the acrosome outer membrane. Plays a role in fertilization through the acrosome reaction. The chain is Protein FAM170B from Mus musculus (Mouse).